The primary structure comprises 294 residues: Release factor glutamine methyltransferase (294 aa).

S-adenosyl-L-methionine is bound by residues E148 and N201. N201–Y204 contacts substrate.

It belongs to the protein N5-glutamine methyltransferase family. PrmC subfamily.

The enzyme catalyses L-glutaminyl-[peptide chain release factor] + S-adenosyl-L-methionine = N(5)-methyl-L-glutaminyl-[peptide chain release factor] + S-adenosyl-L-homocysteine + H(+). In terms of biological role, methylates the class 1 translation termination release factors RF1/PrfA and RF2/PrfB on the glutamine residue of the universally conserved GGQ motif. The sequence is that of Release factor glutamine methyltransferase from Bifidobacterium longum (strain NCC 2705).